The chain runs to 332 residues: 2,3-diketo-L-gulonate reductase (332 aa).

The Proton donor role is filled by H44. Residues 168 to 174, 224 to 225, and 304 to 306 contribute to the NAD(+) site; these read ITMVDMS, WK, and GHE.

Belongs to the LDH2/MDH2 oxidoreductase family. DlgD subfamily. As to quaternary structure, homodimer.

The protein localises to the cytoplasm. The catalysed reaction is 3-dehydro-L-gulonate + NAD(+) = 2,3-dioxo-L-gulonate + NADH + H(+). It catalyses the reaction 3-dehydro-L-gulonate + NADP(+) = 2,3-dioxo-L-gulonate + NADPH + H(+). Functionally, catalyzes the reduction of 2,3-diketo-L-gulonate in the presence of NADH, to form 3-keto-L-gulonate. In Escherichia coli O1:K1 / APEC, this protein is 2,3-diketo-L-gulonate reductase.